Reading from the N-terminus, the 57-residue chain is Potassium channel toxin alpha-KTx 4.2 (57 aa).

The first 20 residues, 1-20 (MKVLYGILIIFILCSMFYLS), serve as a signal peptide directing secretion. Residues 21-22 (QE) constitute a propeptide, removed by a carboxypeptidase. Disulfide bonds link Cys29/Cys50, Cys35/Cys55, and Cys39/Cys57.

Belongs to the short scorpion toxin superfamily. Potassium channel inhibitor family. Alpha-KTx 04 subfamily. As to expression, expressed by the venom gland.

Its subcellular location is the secreted. Functionally, blocker for small-conductance calcium-activated potassium channels KCa2.2/KCNN2 (Kd=80 nM) and KCa2.3/KCNN3 (Kd=197 nM) and ERG1/Kv11.1/KCNH2 potassium channels (53% inhibition at 5 uM). Has also been shown to inhibit Kv1.1/KCNA1 and Nav1.7/SCN9A with a moderate potency, as well as Kv11.1/KCNH2/ERG1 and Kv1.2/KCNA2 with a low potency. This Tityus serrulatus (Brazilian scorpion) protein is Potassium channel toxin alpha-KTx 4.2.